Here is a 116-residue protein sequence, read N- to C-terminus: Large ribosomal subunit protein uL18 (116 aa).

This sequence belongs to the universal ribosomal protein uL18 family. In terms of assembly, part of the 50S ribosomal subunit; part of the 5S rRNA/L5/L18/L25 subcomplex. Contacts the 5S and 23S rRNAs.

Functionally, this is one of the proteins that bind and probably mediate the attachment of the 5S RNA into the large ribosomal subunit, where it forms part of the central protuberance. This Saccharophagus degradans (strain 2-40 / ATCC 43961 / DSM 17024) protein is Large ribosomal subunit protein uL18.